The sequence spans 250 residues: ATP synthase subunit a (250 aa).

5 consecutive transmembrane segments (helical) span residues 27 to 47, 83 to 103, 129 to 149, 191 to 211, and 219 to 239; these read TDTV…AFYL, IAPF…ISNW, INYV…AGIW, IFAG…IMWA, and FDLF…ILYF.

It belongs to the ATPase A chain family. F-type ATPases have 2 components, CF(1) - the catalytic core - and CF(0) - the membrane proton channel. CF(1) has five subunits: alpha(3), beta(3), gamma(1), delta(1), epsilon(1). CF(0) has three main subunits: a(1), b(2) and c(9-12). The alpha and beta chains form an alternating ring which encloses part of the gamma chain. CF(1) is attached to CF(0) by a central stalk formed by the gamma and epsilon chains, while a peripheral stalk is formed by the delta and b chains.

It localises to the cell membrane. Its function is as follows. Key component of the proton channel; it plays a direct role in the translocation of protons across the membrane. In Mycobacterium marinum (strain ATCC BAA-535 / M), this protein is ATP synthase subunit a.